A 149-amino-acid chain; its full sequence is Large ribosomal subunit protein bL9 (149 aa).

It belongs to the bacterial ribosomal protein bL9 family.

Its function is as follows. Binds to the 23S rRNA. The protein is Large ribosomal subunit protein bL9 of Rubrobacter xylanophilus (strain DSM 9941 / JCM 11954 / NBRC 16129 / PRD-1).